The primary structure comprises 772 residues: Carnitine O-palmitoyltransferase 1, muscle isoform (772 aa).

At 1-47 (MAEAHQAVAFQFTVTPDGVDFRLSREALKHVYLSGINSWKKRLIRIK) the chain is on the cytoplasmic side. A helical transmembrane segment spans residues 48 to 73 (NGILRGVYPGSPTSWLVVIMATVGSS). At 74–102 (FCNVDISLGLVSCIQRCLPQGCGPYQTPQ) the chain is on the mitochondrial intermembrane side. The chain crosses the membrane as a helical span at residues 103–122 (TRALLSMAIFSTGVWVTGIF). At 123–772 (FFRQTLKLLL…DLFQVPKAYS (650 aa)) the chain is on the cytoplasmic side. His-473 serves as the catalytic Proton acceptor. 555 to 567 (GKGLIKKCRTSPD) contributes to the CoA binding site. (R)-carnitine contacts are provided by Tyr-589 and Thr-602.

This sequence belongs to the carnitine/choline acetyltransferase family. In terms of tissue distribution, strong expression in heart and skeletal muscle. No expression in liver and kidney.

It is found in the mitochondrion outer membrane. It carries out the reaction (R)-carnitine + hexadecanoyl-CoA = O-hexadecanoyl-(R)-carnitine + CoA. It participates in lipid metabolism; fatty acid beta-oxidation. Functionally, catalyzes the transfer of the acyl group of long-chain fatty acid-CoA conjugates onto carnitine, an essential step for the mitochondrial uptake of long-chain fatty acids and their subsequent beta-oxidation in the mitochondrion. The chain is Carnitine O-palmitoyltransferase 1, muscle isoform (CPT1B) from Homo sapiens (Human).